Here is a 1935-residue protein sequence, read N- to C-terminus: Myosin-7 (1935 aa).

Residues 32–81 enclose the Myosin N-terminal SH3-like domain; that stretch reads DLKKDVFVPDDKEEFVKAKIISREGGKITAETEHGKTVTVKEDQVLQQNP. Residues 85 to 778 form the Myosin motor domain; that stretch reads DKIEDMAMLT…LLGLLEEMRD (694 aa). Lys129 is subject to N6,N6,N6-trimethyllysine. Residue 178 to 185 coordinates ATP; that stretch reads GESGAGKT. Residue Thr378 is modified to Phosphothreonine. Actin-binding regions lie at residues 655-677 and 757-771; these read LNKL…IPNE and RFGH…GLLG. The IQ domain occupies 781-810; that stretch reads LSRIITRIQAQSRGVLARMEFKKLLERRDS. Residues 839-1935 are a coiled coil; it reads LLKSAETEKE…DIGTKGLNEE (1097 aa). Ser1137 and Ser1269 each carry phosphoserine. Thr1282 bears the Phosphothreonine mark. Residue Tyr1308 is modified to Phosphotyrosine. Thr1309 is subject to Phosphothreonine. Ser1510 is subject to Phosphoserine. Phosphothreonine is present on Thr1513. The tract at residues 1907–1935 is disordered; the sequence is EERADIAESQVNKLRAKSRDIGTKGLNEE. Over residues 1923–1935 the composition is skewed to basic and acidic residues; the sequence is KSRDIGTKGLNEE.

This sequence belongs to the TRAFAC class myosin-kinesin ATPase superfamily. Myosin family. In terms of assembly, muscle myosin is a hexameric protein that consists of 2 heavy chain subunits (MHC), 2 alkali light chain subunits (MLC) and 2 regulatory light chain subunits (MLC-2). Interacts with ECPAS. Interacts (via C-terminus) with LRRC39.

Its subcellular location is the cytoplasm. The protein localises to the myofibril. The protein resides in the sarcomere. Its function is as follows. Myosins are actin-based motor molecules with ATPase activity essential for muscle contraction. Forms regular bipolar thick filaments that, together with actin thin filaments, constitute the fundamental contractile unit of skeletal and cardiac muscle. The protein is Myosin-7 (MYH7) of Equus caballus (Horse).